Consider the following 445-residue polypeptide: GTPase Obg (445 aa).

The region spanning 7-164 (PEFVDCVTVE…RKLRLEVKSI (158 aa)) is the Obg domain. The OBG-type G domain maps to 165 to 342 (ADVALVGFPS…FTLRLGEICQ (178 aa)). Residues 171–178 (GFPSVGKS), 196–200 (FTTLH), 217–220 (DVPG), 291–294 (NKID), and 323–325 (SAV) each bind GTP. Mg(2+) contacts are provided by serine 178 and threonine 198. The 78-residue stretch at 357-434 (IPAKNTPEFS…IGGVIFTWDP (78 aa)) folds into the OCT domain.

This sequence belongs to the TRAFAC class OBG-HflX-like GTPase superfamily. OBG GTPase family. As to quaternary structure, monomer. Requires Mg(2+) as cofactor.

The protein resides in the cytoplasm. In terms of biological role, an essential GTPase which binds GTP, GDP and possibly (p)ppGpp with moderate affinity, with high nucleotide exchange rates and a fairly low GTP hydrolysis rate. Plays a role in control of the cell cycle, stress response, ribosome biogenesis and in those bacteria that undergo differentiation, in morphogenesis control. This chain is GTPase Obg, found in Tropheryma whipplei (strain Twist) (Whipple's bacillus).